Reading from the N-terminus, the 975-residue chain is Leucine-zipper-like transcriptional regulator 1 homolog (975 aa).

The segment covering 16 to 32 has biased composition (gly residues); sequence RGGGGGGCGGGGAGGSA. Disordered regions lie at residues 16 to 41 and 158 to 186; these read RGGG…TSGS and MSSS…SCSS. Over residues 174–186 the composition is skewed to low complexity; sequence ASSSHPPGSSCSS. Kelch repeat units lie at residues 263–312, 314–369, 370–417, 421–467, 478–524, and 530–581; these read AMFV…VAGS, MFIF…VYDN, KMWI…PVAV, AMYV…PSRR, FLYV…FHAS, and AMYI…FIVG. BTB domains lie at 574 to 670 and 801 to 870; these read CDIQ…DLKD and CDIS…KMPP.

Belongs to the LZTR1 family. As to quaternary structure, component of some BCR (BTB-CUL3-RBX1) E3 ubiquitin-protein ligase complex. In terms of tissue distribution, expressed in Rdl-expressing neurons of the mushroom body, the neurons projecting to the LC9 optic glomerulus and in a neuronal cluster near the subesophageal ganglion (at protein level).

It participates in protein modification; protein ubiquitination. Functionally, inhibitor of Ras signaling. Acts as a substrate-specific adapter of a BCR (BTB-CUL3-RBX1) E3 ubiquitin-protein ligase complex that mediates ubiquitination of Ras. Together with Nf1, plays an important role for normal sleep behavior, mainly during the night. Might affect sleep by modulating GABA signaling in Rdl-expressing neurons. Might play a role in the regulation of brain glycogen metabolism and organismal levels of triglycerides. The polypeptide is Leucine-zipper-like transcriptional regulator 1 homolog (Drosophila melanogaster (Fruit fly)).